The following is a 115-amino-acid chain: Large ribosomal subunit protein uL23 (115 aa).

Belongs to the universal ribosomal protein uL23 family. As to quaternary structure, part of the 50S ribosomal subunit. Contacts protein L29, and trigger factor when it is bound to the ribosome.

Functionally, one of the early assembly proteins it binds 23S rRNA. One of the proteins that surrounds the polypeptide exit tunnel on the outside of the ribosome. Forms the main docking site for trigger factor binding to the ribosome. The sequence is that of Large ribosomal subunit protein uL23 from Granulibacter bethesdensis (strain ATCC BAA-1260 / CGDNIH1).